We begin with the raw amino-acid sequence, 716 residues long: Myogenesis-regulating glycosidase (716 aa).

The span at 1–11 (MSQNLQETSQA) shows a compositional bias: polar residues. The segment at 1-26 (MSQNLQETSQAYPRHRPGSHAGPKSL) is disordered. Over 1-55 (MSQNLQETSQAYPRHRPGSHAGPKSLKVTPRATMYTFLPDNFSPAKPKPTKELRP) the chain is Cytoplasmic. The helical; Signal-anchor for type II membrane protein transmembrane segment at 56–76 (LLCSAVLGLLLVLAAVVAWCY) threads the bilayer. The Extracellular segment spans residues 77–716 (YSASLRKAER…DEVAYFTWAS (640 aa)). N-linked (GlcNAc...) asparagine glycans are attached at residues asparagine 239, asparagine 249, and asparagine 455. Residues aspartate 462 and glutamate 465 contribute to the active site. The active-site Proton donor is the aspartate 527.

This sequence belongs to the glycosyl hydrolase 31 family. In terms of assembly, interacts with IGF2; this interaction is required for IGF2 secretion. As to expression, expressed in brain, liver, spleen, skeletal muscle, heart, lung and kidney. High expression is observed in the cerebellum, specifically in astrocytes. Highly expressed in skeletal muscle (at protein level).

The protein resides in the nucleus membrane. It localises to the endoplasmic reticulum membrane. Its function is as follows. Putative glycosidase. Promotes myogenesis by activating AKT signaling through the maturation and secretion of IGF2. This Mus musculus (Mouse) protein is Myogenesis-regulating glycosidase (Myorg).